The chain runs to 366 residues: Sigma54-dependent transcriptional activator SfnR (366 aa).

The Sigma-54 factor interaction domain maps to 21 to 250 (QVFEDPRSQA…LENVIHHSLL (230 aa)). ATP-binding positions include 49–56 (GETGTGKE) and 112–121 (ANGGTLFLDE).

Involved in the dimethyl sulfide degradation pathway. Activates the expression of sfnG and sfnF. The polypeptide is Sigma54-dependent transcriptional activator SfnR (Pseudomonas putida (Arthrobacter siderocapsulatus)).